A 343-amino-acid chain; its full sequence is MSAFTPASEVLLRHSDDFEQSRILFAGDLQDDLPARLDTAASRAHTQQFHHWQVLSRQMGDNARFSLVATADDVADCDTLIYYWPKNKPEAQFQLMNLLSLLPVGTDIFVVGENRSGVRSAEQMLADYAPLNKVDSARRCGLYFGRLEKQPVFDADKFWGEYSVDGLTVKTLPGVFSRDGLDVGSQLLLSTLTPHTKGKVLDVGCGAGVLSVAFARHSPKIRLTLCDVSAPAVEASRATLAANGVEGEVFASNVFSEVKGRFDMIISNPPFHDGMQTSLDAAQTLIRGAVRHLNSGGELRIVANAFLPYPDVLDETFGFHEVIAQTGRFKVYRAIMTRQAKKG.

This sequence belongs to the methyltransferase superfamily. RsmC family. As to quaternary structure, monomer.

The protein resides in the cytoplasm. The enzyme catalyses guanosine(1207) in 16S rRNA + S-adenosyl-L-methionine = N(2)-methylguanosine(1207) in 16S rRNA + S-adenosyl-L-homocysteine + H(+). Specifically methylates the guanine in position 1207 of 16S rRNA in the 30S particle. The protein is Ribosomal RNA small subunit methyltransferase C of Escherichia coli (strain ATCC 8739 / DSM 1576 / NBRC 3972 / NCIMB 8545 / WDCM 00012 / Crooks).